A 134-amino-acid polypeptide reads, in one-letter code: Methylglyoxal synthase (134 aa).

An MGS-like domain is found at 1–134 (MHIALIAHDE…DWRDLRRNDE (134 aa)). Residues His-8, Lys-12, 34–37 (TGTT), and 54–55 (SG) contribute to the substrate site. Asp-60 acts as the Proton donor/acceptor in catalysis. Position 87 (His-87) interacts with substrate.

Belongs to the methylglyoxal synthase family.

It catalyses the reaction dihydroxyacetone phosphate = methylglyoxal + phosphate. Catalyzes the formation of methylglyoxal from dihydroxyacetone phosphate. This Listeria welshimeri serovar 6b (strain ATCC 35897 / DSM 20650 / CCUG 15529 / CIP 8149 / NCTC 11857 / SLCC 5334 / V8) protein is Methylglyoxal synthase.